A 37-amino-acid chain; its full sequence is Large ribosomal subunit protein bL36 (37 aa).

Belongs to the bacterial ribosomal protein bL36 family.

This is Large ribosomal subunit protein bL36 (rpmJ) from Fusobacterium nucleatum subsp. nucleatum (strain ATCC 25586 / DSM 15643 / BCRC 10681 / CIP 101130 / JCM 8532 / KCTC 2640 / LMG 13131 / VPI 4355).